A 237-amino-acid chain; its full sequence is Lectin alpha chain (237 aa).

Mn(2+)-binding residues include glutamate 8 and aspartate 10. Ca(2+) contacts are provided by aspartate 10, tyrosine 12, asparagine 14, and aspartate 19. Tyrosine 12 serves as a coordination point for a carbohydrate. Mn(2+) is bound by residues aspartate 19 and histidine 24. Residue 99–100 (LY) participates in a carbohydrate binding. Aspartate 208 provides a ligand contact to Ca(2+). Residue arginine 228 coordinates a carbohydrate.

The protein belongs to the leguminous lectin family. Equilibrium between homodimer and homotetramer. Oligomerization is pH-dependent with homotetramers forming at pH 6.5 and above. Post-translationally, the beta and gamma chains are produced by partial proteolytic processing of the lectin alpha chain by an asparaginyl endopeptidase. Mixture of 60% alpha lectin and 40% of its beta and gamma proteolytic fragments. Seed.

Its subcellular location is the vacuole. The protein localises to the aleurone grain. Its function is as follows. D-mannose/D-glucose-binding lectin. Has anti-inflammatory activity in rats. Induces histamine release in mast cells from hamster and rat. Induces lymphocyte proliferation and IFNG production. Shows toxicity against the aquatic snail B.glabrata at concentrations higher than 20 ug/ml. The polypeptide is Lectin alpha chain (Dioclea virgata).